Reading from the N-terminus, the 1562-residue chain is DNA-directed RNA polymerase subunit beta'' (1562 aa).

Positions 1-22 (MVKKKKFKTKNIQNPPFSSQNS) are disordered. A compositionally biased stretch (polar residues) spans 11–22 (NIQNPPFSSQNS). Zn(2+) is bound by residues C275, C338, C345, and C348.

The protein belongs to the RNA polymerase beta' chain family. RpoC2 subfamily. In plastids the minimal PEP RNA polymerase catalytic core is composed of four subunits: alpha, beta, beta', and beta''. When a (nuclear-encoded) sigma factor is associated with the core the holoenzyme is formed, which can initiate transcription. Zn(2+) serves as cofactor.

It localises to the plastid. The protein resides in the chloroplast. It carries out the reaction RNA(n) + a ribonucleoside 5'-triphosphate = RNA(n+1) + diphosphate. DNA-dependent RNA polymerase catalyzes the transcription of DNA into RNA using the four ribonucleoside triphosphates as substrates. The chain is DNA-directed RNA polymerase subunit beta'' from Chlorella vulgaris (Green alga).